Reading from the N-terminus, the 300-residue chain is Acetylglutamate kinase (300 aa).

Residues 73–74, Arg95, and Asn197 each bind substrate; that span reads GG.

The protein belongs to the acetylglutamate kinase family. ArgB subfamily.

It localises to the cytoplasm. It carries out the reaction N-acetyl-L-glutamate + ATP = N-acetyl-L-glutamyl 5-phosphate + ADP. It functions in the pathway amino-acid biosynthesis; L-arginine biosynthesis; N(2)-acetyl-L-ornithine from L-glutamate: step 2/4. Functionally, catalyzes the ATP-dependent phosphorylation of N-acetyl-L-glutamate. The chain is Acetylglutamate kinase from Polynucleobacter asymbioticus (strain DSM 18221 / CIP 109841 / QLW-P1DMWA-1) (Polynucleobacter necessarius subsp. asymbioticus).